Consider the following 490-residue polypeptide: ATP synthase subunit beta, chloroplastic (490 aa).

Position 6 is a phosphothreonine (T6). S13 bears the Phosphoserine mark. An ATP-binding site is contributed by 172 to 179 (GGAGVGKT).

Belongs to the ATPase alpha/beta chains family. In terms of assembly, F-type ATPases have 2 components, CF(1) - the catalytic core - and CF(0) - the membrane proton channel. CF(1) has five subunits: alpha(3), beta(3), gamma(1), delta(1), epsilon(1). CF(0) has four main subunits: a(1), b(1), b'(1) and c(9-12).

Its subcellular location is the plastid. The protein localises to the chloroplast thylakoid membrane. The enzyme catalyses ATP + H2O + 4 H(+)(in) = ADP + phosphate + 5 H(+)(out). Produces ATP from ADP in the presence of a proton gradient across the membrane. The catalytic sites are hosted primarily by the beta subunits. In Aethionema cordifolium (Lebanon stonecress), this protein is ATP synthase subunit beta, chloroplastic.